The primary structure comprises 594 residues: Insulin-like growth factor 2 mRNA-binding protein 3-A (594 aa).

RRM domains follow at residues 2 to 75 (NKLY…HSVP) and 81 to 156 (RKLQ…YIPD). The segment covering 161–177 (PQAPSQQLQQQPQQQHP) has biased composition (low complexity). Positions 161 to 206 (PQAPSQQLQQQPQQQHPQGRRGFGQRGPARQGSPGAAARPKPQTEV) are disordered. KH domains follow at residues 205-270 (EVPL…CKII) and 286-353 (EIPL…EEEI). Residues 392 to 415 (GMPPPSVGVPSPTSSTSYPPFGQQ) are disordered. Residues 399 to 411 (GVPSPTSSTSYPP) show a composition bias toward low complexity. KH domains follow at residues 418-483 (SETV…QGRI) and 500-566 (KLET…QRKI).

Belongs to the RRM IMP/VICKZ family. In terms of assembly, homodimer and multimer. Associates with microtubules. Interaction with a translocation machinery protein TRAPA of the endoplasmic reticulum. Component of a mRNP complex, at least composed of DAZAP1, IGF2BP3, STAU and VgRBP60. The mRNP complex with DAZAP1, IGF2BP3, STAU and VgRBP60 is only found in the cytoplasm. Interacts with a hnRNP 1 related RNA transport protein VgRBP60 both in the nucleus (in a RNA-independent manner) and the cytoplasm (in a RNA-dependent manner). Found in a B3 activator complex.

Its subcellular location is the nucleus. It is found in the cytoplasm. The protein resides in the endoplasmic reticulum. Functionally, RNA-binding protein that acts as a regulator of mRNA transport and localization. Binds to the RNA sequence motif 5'-UUCAC-3'. Preferentially binds to N6-methyladenosine (m6A)-containing mRNAs and increases their stability. Mediates the specific association of Vg1 RNA to microtubules. Binds specifically to the vegetal localization elements (VLE or VgLE) in the 3'-UTR of Vg1 and VegT mRNAs. Binds to the Vg1 and VegT mRNAs in both the nucleus and the cytoplasm. May regulate mRNA translation. Acts as a transcription regulator. Binds to the 5'-[TA]GGTTACT-3' motif within element 3 of the TFIIIA gene promoter. The sequence is that of Insulin-like growth factor 2 mRNA-binding protein 3-A (igf2bp3-a) from Xenopus laevis (African clawed frog).